The primary structure comprises 283 residues: Probable endonuclease 4 (283 aa).

The Zn(2+) site is built by His69, His109, Glu145, Asp179, His182, His216, Asp229, His231, and Glu261.

This sequence belongs to the AP endonuclease 2 family. Requires Zn(2+) as cofactor.

It carries out the reaction Endonucleolytic cleavage to 5'-phosphooligonucleotide end-products.. Its function is as follows. Endonuclease IV plays a role in DNA repair. It cleaves phosphodiester bonds at apurinic or apyrimidinic (AP) sites, generating a 3'-hydroxyl group and a 5'-terminal sugar phosphate. The polypeptide is Probable endonuclease 4 (Prosthecochloris aestuarii (strain DSM 271 / SK 413)).